A 317-amino-acid chain; its full sequence is Ciliary microtubule inner protein 2A (317 aa).

The disordered stretch occupies residues 131–153 (TPDTPHPPCPPGRKGDSRDLGHP).

The protein belongs to the CIMIP2 family. As to quaternary structure, microtubule inner protein component of sperm flagellar doublet microtubules.

It localises to the cytoplasm. The protein resides in the cytoskeleton. It is found in the flagellum axoneme. Functionally, microtubule inner protein (MIP) part of the dynein-decorated doublet microtubules (DMTs) in flagellum axoneme. Binds to the intra-tubulin interfaces. This Homo sapiens (Human) protein is Ciliary microtubule inner protein 2A.